Reading from the N-terminus, the 603-residue chain is Elongation factor 4 (603 aa).

The 183-residue stretch at 2–184 (NHIRNFSIIA…AVVARMPPPR (183 aa)) folds into the tr-type G domain. GTP contacts are provided by residues 14–19 (DHGKST) and 131–134 (NKMD).

The protein belongs to the TRAFAC class translation factor GTPase superfamily. Classic translation factor GTPase family. LepA subfamily.

It localises to the cell inner membrane. The enzyme catalyses GTP + H2O = GDP + phosphate + H(+). Functionally, required for accurate and efficient protein synthesis under certain stress conditions. May act as a fidelity factor of the translation reaction, by catalyzing a one-codon backward translocation of tRNAs on improperly translocated ribosomes. Back-translocation proceeds from a post-translocation (POST) complex to a pre-translocation (PRE) complex, thus giving elongation factor G a second chance to translocate the tRNAs correctly. Binds to ribosomes in a GTP-dependent manner. This is Elongation factor 4 from Albidiferax ferrireducens (strain ATCC BAA-621 / DSM 15236 / T118) (Rhodoferax ferrireducens).